Reading from the N-terminus, the 573-residue chain is Proline--tRNA ligase (573 aa).

It belongs to the class-II aminoacyl-tRNA synthetase family. ProS type 1 subfamily. In terms of assembly, homodimer.

Its subcellular location is the cytoplasm. It carries out the reaction tRNA(Pro) + L-proline + ATP = L-prolyl-tRNA(Pro) + AMP + diphosphate. Functionally, catalyzes the attachment of proline to tRNA(Pro) in a two-step reaction: proline is first activated by ATP to form Pro-AMP and then transferred to the acceptor end of tRNA(Pro). As ProRS can inadvertently accommodate and process non-cognate amino acids such as alanine and cysteine, to avoid such errors it has two additional distinct editing activities against alanine. One activity is designated as 'pretransfer' editing and involves the tRNA(Pro)-independent hydrolysis of activated Ala-AMP. The other activity is designated 'posttransfer' editing and involves deacylation of mischarged Ala-tRNA(Pro). The misacylated Cys-tRNA(Pro) is not edited by ProRS. The protein is Proline--tRNA ligase of Elusimicrobium minutum (strain Pei191).